Consider the following 485-residue polypeptide: Ras-like GTPase YcjX (485 aa).

Positions Gly-33 to Thr-40 match the Walker A motif motif. Ser-35, Gly-36, Gly-38, Lys-39, Thr-40, Ala-41, Trp-110, Ser-113, Thr-114, Arg-115, Lys-355, Asp-357, and His-358 together coordinate GTP. Gly-36, Gly-38, Lys-39, Thr-40, Ala-41, Trp-110, Ser-113, and Thr-114 together coordinate GDP. Positions 355, 357, 358, 395, 396, and 397 each coordinate GDP. Residue Ile-397 coordinates GTP.

In terms of assembly, monomer in solution. It depends on Mg(2+) as a cofactor.

The catalysed reaction is GTP + H2O = GDP + phosphate + H(+). Its activity is regulated as follows. Alternates between an inactive form bound to GDP and an active form bound to GTP. Likely activated by a guanine nucleotide-exchange factor (GEF). Its function is as follows. Binds GTP and GDP. Has intrinsic GTPase activity. Does not hydrolyze ATP. May act as a transducer of stress responses. In Shewanella oneidensis (strain ATCC 700550 / JCM 31522 / CIP 106686 / LMG 19005 / NCIMB 14063 / MR-1), this protein is Ras-like GTPase YcjX.